A 181-amino-acid chain; its full sequence is MPLRVKLDKNDLSKNTASVKFTDKPYLVANKIIKSLEFNATSLYRCIKKNKLRSENFSVQLSRRLLRTKKTLVLPSHVNITLISNSYDVILSWFIPALGIKIDCVXGRATHHTFYCDSVGFYYGQCAEICGRYHHHMPIKLCILPFEHFLIWWQHFGLPKLLFTESKNRFETDYGLKKFCW.

5 residues coordinate Cu cation: C126, E128, C130, H134, and M137. E128 contacts Mg(2+).

Belongs to the cytochrome c oxidase subunit 2 family. In terms of assembly, component of the cytochrome c oxidase (complex IV, CIV), a multisubunit enzyme composed of a catalytic core of 3 subunits and several supernumerary subunits. The complex exists as a monomer or a dimer and forms supercomplexes (SCs) in the inner mitochondrial membrane with ubiquinol-cytochrome c oxidoreductase (cytochrome b-c1 complex, complex III, CIII). Cu cation is required as a cofactor.

The protein localises to the mitochondrion inner membrane. It carries out the reaction 4 Fe(II)-[cytochrome c] + O2 + 8 H(+)(in) = 4 Fe(III)-[cytochrome c] + 2 H2O + 4 H(+)(out). Functionally, component of the cytochrome c oxidase, the last enzyme in the mitochondrial electron transport chain which drives oxidative phosphorylation. The respiratory chain contains 3 multisubunit complexes succinate dehydrogenase (complex II, CII), ubiquinol-cytochrome c oxidoreductase (cytochrome b-c1 complex, complex III, CIII) and cytochrome c oxidase (complex IV, CIV), that cooperate to transfer electrons derived from NADH and succinate to molecular oxygen, creating an electrochemical gradient over the inner membrane that drives transmembrane transport and the ATP synthase. Cytochrome c oxidase is the component of the respiratory chain that catalyzes the reduction of oxygen to water. Electrons originating from reduced cytochrome c in the intermembrane space (IMS) are transferred via the dinuclear copper A center (CU(A)) of subunit 2 and heme A of subunit 1 to the active site in subunit 1, a binuclear center (BNC) formed by heme A3 and copper B (CU(B)). The BNC reduces molecular oxygen to 2 water molecules using 4 electrons from cytochrome c in the IMS and 4 protons from the mitochondrial matrix. The protein is Cytochrome c oxidase subunit 2 (COII) of Paramecium primaurelia.